Consider the following 473-residue polypeptide: Lactate utilization protein B 2 (473 aa).

4Fe-4S ferredoxin-type domains are found at residues glycine 302–tyrosine 332 and tyrosine 351–leucine 380. Residues cysteine 311, cysteine 314, cysteine 317, cysteine 321, cysteine 364, cysteine 367, and cysteine 371 each coordinate [4Fe-4S] cluster.

The protein belongs to the LutB/YkgF family.

Is involved in L-lactate degradation and allows cells to grow with lactate as the sole carbon source. Has probably a role as an electron transporter during oxidation of L-lactate. This Bacillus mycoides (strain KBAB4) (Bacillus weihenstephanensis) protein is Lactate utilization protein B 2.